A 286-amino-acid polypeptide reads, in one-letter code: Energy-coupling factor transporter ATP-binding protein EcfA2 (286 aa).

One can recognise an ABC transporter domain in the interval 3–246; sequence IQFNQVSYIY…KTQLLKWHIE (244 aa). 40-47 serves as a coordination point for ATP; sequence GQTGSGKS.

This sequence belongs to the ABC transporter superfamily. Energy-coupling factor EcfA family. As to quaternary structure, forms a stable energy-coupling factor (ECF) transporter complex composed of 2 membrane-embedded substrate-binding proteins (S component), 2 ATP-binding proteins (A component) and 2 transmembrane proteins (T component).

The protein resides in the cell membrane. Its function is as follows. ATP-binding (A) component of a common energy-coupling factor (ECF) ABC-transporter complex. Unlike classic ABC transporters this ECF transporter provides the energy necessary to transport a number of different substrates. This is Energy-coupling factor transporter ATP-binding protein EcfA2 from Staphylococcus epidermidis (strain ATCC 35984 / DSM 28319 / BCRC 17069 / CCUG 31568 / BM 3577 / RP62A).